The chain runs to 161 residues: Transcriptional repressor NrdR (161 aa).

Over residues 1–11 (MQCPHCQHHNS) the composition is skewed to basic residues. Residues 1 to 21 (MQCPHCQHHNSRVLESRSSEG) are disordered. A zinc finger spans residues 3-34 (CPHCQHHNSRVLESRSSEGGQSIRRRRECLEC). Positions 49–139 (VTVIKQDGER…VYGRFQGIAD (91 aa)) constitute an ATP-cone domain.

Belongs to the NrdR family. Zn(2+) serves as cofactor.

Functionally, negatively regulates transcription of bacterial ribonucleotide reductase nrd genes and operons by binding to NrdR-boxes. The polypeptide is Transcriptional repressor NrdR (Synechocystis sp. (strain ATCC 27184 / PCC 6803 / Kazusa)).